The chain runs to 127 residues: Nuclear transport factor 2 (127 aa).

Lys4 bears the N6-acetyllysine mark. Residues 10–121 (IGSSFIQHYY…WVCTNDMFRL (112 aa)) enclose the NTF2 domain.

As to quaternary structure, homodimer. Interacts with RAN (GDP-bound form); the interaction is direct and regulates RAN nuclear import. Interacts with the nucleoporins NUP54, NUP58 and NUP62 (via FG repeats); recruits NUTF2 to the nuclear pore complex a step required for NUTF2-mediated GDP-bound RAN nuclear import. Interacts with CAPG; mediates its nuclear import.

The protein localises to the cytoplasm. Its subcellular location is the cytosol. It is found in the nucleus outer membrane. The protein resides in the nucleus. It localises to the nuclear pore complex. The protein localises to the nucleus inner membrane. Its subcellular location is the nucleoplasm. Mediates the import of GDP-bound RAN from the cytoplasm into the nucleus which is essential for the function of RAN in cargo receptor-mediated nucleocytoplasmic transport. Thereby, plays indirectly a more general role in cargo receptor-mediated nucleocytoplasmic transport. Interacts with GDP-bound RAN in the cytosol, recruits it to the nuclear pore complex via its interaction with nucleoporins and promotes its nuclear import. The chain is Nuclear transport factor 2 from Bos taurus (Bovine).